A 446-amino-acid polypeptide reads, in one-letter code: Tubulin beta-1 chain (446 aa).

GTP-binding residues include Gln11, Glu69, Ser138, Gly142, Thr143, Gly144, Asn204, and Asn226. Glu69 lines the Mg(2+) pocket. Residues 422–446 (YQQYQDATADEEGEYEDEEEGDLQD) form a disordered region. Positions 429 to 446 (TADEEGEYEDEEEGDLQD) are enriched in acidic residues.

Belongs to the tubulin family. Dimer of alpha and beta chains. A typical microtubule is a hollow water-filled tube with an outer diameter of 25 nm and an inner diameter of 15 nM. Alpha-beta heterodimers associate head-to-tail to form protofilaments running lengthwise along the microtubule wall with the beta-tubulin subunit facing the microtubule plus end conferring a structural polarity. Microtubules usually have 13 protofilaments but different protofilament numbers can be found in some organisms and specialized cells. Mg(2+) serves as cofactor. In terms of tissue distribution, found in areas of rapidly dividing tissues.

Its subcellular location is the cytoplasm. It localises to the cytoskeleton. In terms of biological role, tubulin is the major constituent of microtubules, a cylinder consisting of laterally associated linear protofilaments composed of alpha- and beta-tubulin heterodimers. Microtubules grow by the addition of GTP-tubulin dimers to the microtubule end, where a stabilizing cap forms. Below the cap, tubulin dimers are in GDP-bound state, owing to GTPase activity of alpha-tubulin. The chain is Tubulin beta-1 chain (TUBB1) from Zea mays (Maize).